Consider the following 410-residue polypeptide: uncharacterized protein (410 aa).

A run of 12 helical transmembrane segments spans residues 27–47 (ILAL…VQSI), 63–83 (SLAL…TGPL), 97–117 (LFIA…ISIV), 118–138 (LLRA…MTYI), 145–165 (NSLS…GFLG), 180–200 (ISLM…LYFL), 228–248 (VLFF…TIFN), 254–274 (LMLE…TIYL), 293–313 (NNIL…TQYN), 316–332 (FIII…FFAS), 355–375 (YLFF…FFWF), and 378–398 (QWLG…FLSF).

It belongs to the major facilitator superfamily.

The protein resides in the cell membrane. This is an uncharacterized protein from Buchnera aphidicola subsp. Acyrthosiphon pisum (strain APS) (Acyrthosiphon pisum symbiotic bacterium).